An 81-amino-acid polypeptide reads, in one-letter code: Acyl carrier protein (81 aa).

The Carrier domain occupies 4-79 (DEVYSRVRKI…DAVNYILSKK (76 aa)). Serine 39 is modified (O-(pantetheine 4'-phosphoryl)serine).

Belongs to the acyl carrier protein (ACP) family. In terms of processing, 4'-phosphopantetheine is transferred from CoA to a specific serine of apo-ACP by AcpS. This modification is essential for activity because fatty acids are bound in thioester linkage to the sulfhydryl of the prosthetic group.

The protein localises to the cytoplasm. The protein operates within lipid metabolism; fatty acid biosynthesis. Carrier of the growing fatty acid chain in fatty acid biosynthesis. The sequence is that of Acyl carrier protein from Synechococcus sp. (strain JA-3-3Ab) (Cyanobacteria bacterium Yellowstone A-Prime).